The sequence spans 310 residues: Methionyl-tRNA formyltransferase (310 aa).

Serine 111 to proline 114 contributes to the (6S)-5,6,7,8-tetrahydrofolate binding site.

The protein belongs to the Fmt family.

It catalyses the reaction L-methionyl-tRNA(fMet) + (6R)-10-formyltetrahydrofolate = N-formyl-L-methionyl-tRNA(fMet) + (6S)-5,6,7,8-tetrahydrofolate + H(+). Attaches a formyl group to the free amino group of methionyl-tRNA(fMet). The formyl group appears to play a dual role in the initiator identity of N-formylmethionyl-tRNA by promoting its recognition by IF2 and preventing the misappropriation of this tRNA by the elongation apparatus. This Nitrobacter hamburgensis (strain DSM 10229 / NCIMB 13809 / X14) protein is Methionyl-tRNA formyltransferase.